The sequence spans 291 residues: MEITASLVKELRERTGAGMMECKKALTEANGDIDAAAEAMRKSGAAKADKKADRVAAEGRLGLAQDGGKAVLVEVNSETDFVANDDNFKSFVNAVAAAALASGATDVEAVKAAKLADGRTVEEARATAVQTLGENIQIRRMVNVDTTGNIGAYVHTNGKVGVLVDLIGGDVELARGLAMHVAALKPPHNKAADVPADFVEKEKEIELAKMSEKDKAKPADILEKIISGKINKIVSDVTLYGQTYVLGDTTVEQVVKAAGADVAGFKLLIVGEGIEKVVEDYAAEVAKAMQV.

The involved in Mg(2+) ion dislocation from EF-Tu stretch occupies residues 79–82 (TDFV).

The protein belongs to the EF-Ts family.

The protein resides in the cytoplasm. Functionally, associates with the EF-Tu.GDP complex and induces the exchange of GDP to GTP. It remains bound to the aminoacyl-tRNA.EF-Tu.GTP complex up to the GTP hydrolysis stage on the ribosome. The chain is Elongation factor Ts from Stenotrophomonas maltophilia (strain K279a).